The sequence spans 184 residues: Ras-related protein Rap-1b (184 aa).

A GTP-binding site is contributed by Gly-10 to Ala-18. Residues Gln-25–Met-67 are interaction with KRIT1. The Effector region signature appears at Tyr-32 to Tyr-40. Residues Asp-57–Thr-61, Asn-116–Asp-119, and Ser-147–Lys-149 each bind GTP. Position 179 is a phosphoserine; by PKA (Ser-179). Cys-181 carries the post-translational modification Cysteine methyl ester. The S-geranylgeranyl cysteine moiety is linked to residue Cys-181. A propeptide spans Gln-182–Leu-184 (removed in mature form).

As to quaternary structure, heterodimer with RAP1GAP. Interacts with EPAC2. Interacts with SGSM1. Interacts with SGSM2. Interacts with SGSM3. Interacts with KRIT1. Interacts with RAP1GDS1.

It localises to the cell membrane. The protein resides in the cytoplasm. The protein localises to the cytosol. It is found in the cell junction. It catalyses the reaction GTP + H2O = GDP + phosphate + H(+). Activated by guanine nucleotide-exchange factor (GEF) EPAC2 in a cAMP-dependent manner. GTP-binding protein that possesses intrinsic GTPase activity. Contributes to the polarizing activity of KRIT1 and CDH5 in the establishment and maintenance of correct endothelial cell polarity and vascular lumen. Required for the localization of phosphorylated PRKCZ, PARD3 and TIAM1 to the cell junction. Plays a role in the establishment of basal endothelial barrier function. The polypeptide is Ras-related protein Rap-1b (RAP1B) (Bos taurus (Bovine)).